Consider the following 626-residue polypeptide: Beta-galactosidase large subunit (626 aa).

The active-site Proton donor is the Glu466. Glu534 acts as the Nucleophile in catalysis.

Belongs to the glycosyl hydrolase 2 family. Heterodimer of a large (LacL) and a small subunit (LacM).

The enzyme catalyses Hydrolysis of terminal non-reducing beta-D-galactose residues in beta-D-galactosides.. In terms of biological role, component of a beta-galactosidase that displays activity with the artificial chromogenic substrate o-nitrophenyl-beta-D-galactopyranoside (ONPG). The sequence is that of Beta-galactosidase large subunit from Leuconostoc lactis.